We begin with the raw amino-acid sequence, 182 residues long: Succinate dehydrogenase cytochrome b560 subunit, mitochondrial (182 aa).

A helical membrane pass occupies residues 65–94 (LTWMLSGFHRISGCVMAGTLLVGGIGFAVL). Over 95–114 (PFDFTAFVDFIRSWNLPCAV) the chain is Mitochondrial intermembrane. A helical transmembrane segment spans residues 115–139 (TAVFKYIIAFPIIFHTLNGIRFLGF). His-129 serves as a coordination point for heme. Residues 140 to 147 (DLAKGVNN) are Mitochondrial matrix-facing. The helical transmembrane segment at 148-169 (VGQIYKSGYLVSGLSAILALAI) threads the bilayer. Residues 170 to 172 (VFN) are Mitochondrial intermembrane-facing.

The protein belongs to the cytochrome b560 family. Component of complex II composed of four subunits: a flavoprotein (FP), iron-sulfur protein (IP), and a cytochrome b560 composed of two integral membrane proteins. Heme is required as a cofactor.

It localises to the mitochondrion inner membrane. It functions in the pathway carbohydrate metabolism; tricarboxylic acid cycle. Membrane-anchoring subunit of succinate dehydrogenase (SDH) that is involved in complex II of the mitochondrial electron transport chain and is responsible for transferring electrons from succinate to ubiquinone (coenzyme Q). Mediates resistance to enteropathogenic E.coli infection. The protein is Succinate dehydrogenase cytochrome b560 subunit, mitochondrial (mev-1) of Caenorhabditis elegans.